The primary structure comprises 338 residues: Clathrin light chain 1 (338 aa).

The interval M1–R111 is disordered. 2 stretches are compositionally biased toward polar residues: residues S29 to N47 and S61 to S73. The segment covering N102–R111 has biased composition (basic and acidic residues). Positions N102–R163 are involved in binding clathrin heavy chain. Residues L122–D142 are a coiled coil. A disordered region spans residues I192–E338. A compositionally biased stretch (basic and acidic residues) spans P197–P212. The span at N241 to A253 shows a compositional bias: pro residues. Over residues K254 to P304 the composition is skewed to basic and acidic residues.

This sequence belongs to the clathrin light chain family. In terms of assembly, clathrin coats are formed from molecules containing 3 heavy chains and 3 light chains.

The protein resides in the cytoplasmic vesicle membrane. It localises to the membrane. Its subcellular location is the coated pit. In terms of biological role, clathrin is the major protein of the polyhedral coat of coated pits and vesicles. The protein is Clathrin light chain 1 of Arabidopsis thaliana (Mouse-ear cress).